Consider the following 140-residue polypeptide: MVGLVYYSSRSGNTARLMERLGLEALRLPQTEPSPEVDAPYVLVTPTFADGEGRGAVPKPVIKFLNNSRNRALLRGVIAGGNRNFGDTFALAGDVIAKKCNVPVLYRFELAGTETDIARMRAGLARFWAAQEQQTCLTQA.

Belongs to the NrdI family.

Functionally, probably involved in ribonucleotide reductase function. This chain is Protein NrdI, found in Ruegeria sp. (strain TM1040) (Silicibacter sp.).